The primary structure comprises 546 residues: MPPPHVRAWYSYAFAAEVFSSYPSGNIPANHFGTCDGKALQSSDPRGMDRYSFVQSSSMYVKSIAVACQAICIISIGPLADIAYWRKRLLLTFAYSGSLSGILFLLFPPLPYAWTPIMAAILNIVGNATYSTSIVCSNAFLPGLAKEDVDVQKAWEEATSEGLQDGLRDVHEDTDEENTGSVSREDEATHLLPDRLIPAVCAISTQDLALSDPLAKLIEPSNAKKHYESRLSLTTSRLSSTGTAIGFFSGVSVLTLLLIPVTALGGSTFSMRLAIGLSGVWWALFTVPTCIGLPGGAPGHGSDFSASQVKKAWVKIGKMVAPKQIHQLPNLYIFLLAWIFLSDGFHTTTYAAILYASSVLSMSAPKIILVGILVQLAAVVSSVLVPRVQRRLSTTSSKPVTNYKVLLAGVVAAAFIPVYTCAGLVLPFGGLRSEGEMYVLAVWFGLVFGPFLSYSRAVYAELIPPGHESTFFSLFAFTDKSASFIGPAAVGLISDLTGNIRYGFLFLLVMLVVPIPVLGRVAVERGRREAVEWAERSRKEMSDERV.

A run of 3 helical transmembrane segments spans residues 64–84 (IAVA…DIAY), 102–122 (ILFL…AAIL), and 124–144 (IVGN…LPGL). The tract at residues 160-185 (SEGLQDGLRDVHEDTDEENTGSVSRE) is disordered. 8 consecutive transmembrane segments (helical) span residues 244–264 (AIGF…VTAL), 273–293 (LAIG…CIGL), 333–353 (IFLL…YAAI), 365–385 (PKII…SVLV), 405–425 (VLLA…AGLV), 435–455 (GEMY…LSYS), 473–493 (SLFA…VGLI), and 503–523 (GFLF…RVAV).

It belongs to the ATG22 family.

It localises to the vacuole membrane. Vacuolar effluxer which mediate the efflux of amino acids resulting from autophagic degradation. The release of autophagic amino acids allows the maintenance of protein synthesis and viability during nitrogen starvation. The protein is Autophagy-related protein 22 (ATG22) of Cryptococcus neoformans var. neoformans serotype D (strain B-3501A) (Filobasidiella neoformans).